The chain runs to 339 residues: MRISAAGGGTGGHLYPAVSILEKLAEMKKLNVTYFCLEKGIESKILPLEHPEYKLIKIDLKGLERPIWKPSNFTRLLKISQSESIIALEIKQCDFGLMTGGYISYPVGKVCKKLKKPFFIQEQNVVPGLANKALSLSAKKIFVAFDKTVEFFPKSVRNKILVTGNPVREKDNEEMLFGKDYVLVLGGSRGSEFINNLMEEVYKVEHNLKFVHSTGSKEWVDRLSIFENVKAVDYIYNASAAWKGARAVIARAGATTIGEMLYYGLPGILVPWDGATGSHQLYNALEIEKMGKALVLKECDATVSTLLKKLYQVLEMDKKPKMKINPAEIIAKTILEELK.

Residues 10–12, Asn124, Arg168, Ser188, Ile235, and Gln280 each bind UDP-N-acetyl-alpha-D-glucosamine; that span reads TGG.

It belongs to the glycosyltransferase 28 family. MurG subfamily.

It localises to the cell inner membrane. It carries out the reaction di-trans,octa-cis-undecaprenyl diphospho-N-acetyl-alpha-D-muramoyl-L-alanyl-D-glutamyl-meso-2,6-diaminopimeloyl-D-alanyl-D-alanine + UDP-N-acetyl-alpha-D-glucosamine = di-trans,octa-cis-undecaprenyl diphospho-[N-acetyl-alpha-D-glucosaminyl-(1-&gt;4)]-N-acetyl-alpha-D-muramoyl-L-alanyl-D-glutamyl-meso-2,6-diaminopimeloyl-D-alanyl-D-alanine + UDP + H(+). Its pathway is cell wall biogenesis; peptidoglycan biosynthesis. Cell wall formation. Catalyzes the transfer of a GlcNAc subunit on undecaprenyl-pyrophosphoryl-MurNAc-pentapeptide (lipid intermediate I) to form undecaprenyl-pyrophosphoryl-MurNAc-(pentapeptide)GlcNAc (lipid intermediate II). This chain is UDP-N-acetylglucosamine--N-acetylmuramyl-(pentapeptide) pyrophosphoryl-undecaprenol N-acetylglucosamine transferase, found in Pseudothermotoga lettingae (strain ATCC BAA-301 / DSM 14385 / NBRC 107922 / TMO) (Thermotoga lettingae).